Consider the following 619-residue polypeptide: 1-deoxy-D-xylulose-5-phosphate synthase (619 aa).

Thiamine diphosphate contacts are provided by residues His80 and 121 to 123 (GHS). Mg(2+) is bound at residue Asp152. Thiamine diphosphate is bound by residues 153-154 (GA), Asn181, Tyr288, and Glu370. Asn181 is a Mg(2+) binding site.

This sequence belongs to the transketolase family. DXPS subfamily. In terms of assembly, homodimer. Mg(2+) serves as cofactor. It depends on thiamine diphosphate as a cofactor.

It catalyses the reaction D-glyceraldehyde 3-phosphate + pyruvate + H(+) = 1-deoxy-D-xylulose 5-phosphate + CO2. The protein operates within metabolic intermediate biosynthesis; 1-deoxy-D-xylulose 5-phosphate biosynthesis; 1-deoxy-D-xylulose 5-phosphate from D-glyceraldehyde 3-phosphate and pyruvate: step 1/1. Its function is as follows. Catalyzes the acyloin condensation reaction between C atoms 2 and 3 of pyruvate and glyceraldehyde 3-phosphate to yield 1-deoxy-D-xylulose-5-phosphate (DXP). The chain is 1-deoxy-D-xylulose-5-phosphate synthase from Yersinia pestis (strain Pestoides F).